A 180-amino-acid chain; its full sequence is Large ribosomal subunit protein uL5 (180 aa).

It belongs to the universal ribosomal protein uL5 family. In terms of assembly, part of the 50S ribosomal subunit; part of the 5S rRNA/L5/L18/L25 subcomplex. Contacts the 5S rRNA and the P site tRNA. Forms a bridge to the 30S subunit in the 70S ribosome.

Its function is as follows. This is one of the proteins that bind and probably mediate the attachment of the 5S RNA into the large ribosomal subunit, where it forms part of the central protuberance. In the 70S ribosome it contacts protein S13 of the 30S subunit (bridge B1b), connecting the 2 subunits; this bridge is implicated in subunit movement. Contacts the P site tRNA; the 5S rRNA and some of its associated proteins might help stabilize positioning of ribosome-bound tRNAs. The chain is Large ribosomal subunit protein uL5 from Synechococcus sp. (strain JA-2-3B'a(2-13)) (Cyanobacteria bacterium Yellowstone B-Prime).